The following is a 350-amino-acid chain: Variable large protein 4 (350 aa).

A signal peptide spans 1–18 (MRRRISAIIMTLFMVLVS). The N-palmitoyl cysteine moiety is linked to residue Cys19. Cys19 carries the S-diacylglycerol cysteine lipid modification.

This sequence belongs to the variable large protein (Vlp) family. Delta subfamily.

The protein localises to the cell outer membrane. In terms of biological role, the Vlp and Vsp proteins are antigenically distinct proteins, only one vlp or vsp gene is transcriptionally active at any one time. Switching between these genes is a mechanism of host immune response evasion. The polypeptide is Variable large protein 4 (Borrelia hermsii).